Reading from the N-terminus, the 382-residue chain is Na(+)/H(+) antiporter NhaA 2 (382 aa).

11 helical membrane-spanning segments follow: residues 8–28 (FFSS…AAII), 49–69 (LSVE…MVGL), 87–107 (ALPG…YVWF), 115–135 (LAGW…VLAL), 146–166 (IFLS…IALF), 169–189 (SNIS…LFIM), 209–229 (FFML…ALFI), 252–272 (WVTF…ALSG), 286–306 (VALG…LLAV), 325–345 (VSVL…LAFA), and 353–373 (EVKV…MLIL).

This sequence belongs to the NhaA Na(+)/H(+) (TC 2.A.33) antiporter family.

The protein resides in the cell inner membrane. The catalysed reaction is Na(+)(in) + 2 H(+)(out) = Na(+)(out) + 2 H(+)(in). Functionally, na(+)/H(+) antiporter that extrudes sodium in exchange for external protons. The sequence is that of Na(+)/H(+) antiporter NhaA 2 from Klebsiella pneumoniae subsp. pneumoniae (strain ATCC 700721 / MGH 78578).